The chain runs to 1188 residues: DNA-directed RNA polymerase subunit beta (1188 aa).

It belongs to the RNA polymerase beta chain family. As to quaternary structure, the RNAP catalytic core consists of 2 alpha, 1 beta, 1 beta' and 1 omega subunit. When a sigma factor is associated with the core the holoenzyme is formed, which can initiate transcription.

The enzyme catalyses RNA(n) + a ribonucleoside 5'-triphosphate = RNA(n+1) + diphosphate. In terms of biological role, DNA-dependent RNA polymerase catalyzes the transcription of DNA into RNA using the four ribonucleoside triphosphates as substrates. The sequence is that of DNA-directed RNA polymerase subunit beta from Streptococcus pyogenes serotype M18 (strain MGAS8232).